A 553-amino-acid chain; its full sequence is 2-succinyl-5-enolpyruvyl-6-hydroxy-3-cyclohexene-1-carboxylate synthase (553 aa).

The protein belongs to the TPP enzyme family. MenD subfamily. As to quaternary structure, homodimer. The cofactor is Mg(2+). Mn(2+) is required as a cofactor. It depends on thiamine diphosphate as a cofactor.

The catalysed reaction is isochorismate + 2-oxoglutarate + H(+) = 5-enolpyruvoyl-6-hydroxy-2-succinyl-cyclohex-3-ene-1-carboxylate + CO2. Its pathway is quinol/quinone metabolism; 1,4-dihydroxy-2-naphthoate biosynthesis; 1,4-dihydroxy-2-naphthoate from chorismate: step 2/7. The protein operates within quinol/quinone metabolism; menaquinone biosynthesis. Its function is as follows. Catalyzes the thiamine diphosphate-dependent decarboxylation of 2-oxoglutarate and the subsequent addition of the resulting succinic semialdehyde-thiamine pyrophosphate anion to isochorismate to yield 2-succinyl-5-enolpyruvyl-6-hydroxy-3-cyclohexene-1-carboxylate (SEPHCHC). In Thermobifida fusca (strain YX), this protein is 2-succinyl-5-enolpyruvyl-6-hydroxy-3-cyclohexene-1-carboxylate synthase.